A 321-amino-acid chain; its full sequence is Probable heme-iron transport system permease protein IsdF (321 aa).

The next 9 helical transmembrane spans lie at 9–29 (LLFL…FVTG), 61–81 (ILIA…LQAA), 89–109 (ANII…MLFI), 114–134 (FYLP…IILL), 143–163 (VSMI…LEIL), 179–199 (IWSD…LTLL), 233–253 (VFLA…GIIV), 267–287 (LIPF…LLGR), and 294–314 (EIPA…YLIC).

The protein belongs to the binding-protein-dependent transport system permease family. FecCD subfamily.

It is found in the cell membrane. Part of the binding-protein-dependent transport system for heme-iron. Responsible for the translocation of the substrate across the membrane. The polypeptide is Probable heme-iron transport system permease protein IsdF (isdF) (Staphylococcus aureus (strain NCTC 8325 / PS 47)).